Here is a 429-residue protein sequence, read N- to C-terminus: Asparagine--tRNA ligase (429 aa).

The protein belongs to the class-II aminoacyl-tRNA synthetase family.

It localises to the cytoplasm. The enzyme catalyses tRNA(Asn) + L-asparagine + ATP = L-asparaginyl-tRNA(Asn) + AMP + diphosphate + H(+). This is Asparagine--tRNA ligase from Thermoplasma acidophilum (strain ATCC 25905 / DSM 1728 / JCM 9062 / NBRC 15155 / AMRC-C165).